The sequence spans 597 residues: Centrosomal protein of 70 kDa (597 aa).

Positions 1–24 (MFPVAPKPQDSNQPSDRLMTEKQQ) are disordered. Coiled coils occupy residues 66-179 (MRQN…QTEV) and 254-320 (TYKG…QELI). One copy of the TPR repeat lies at 483–516 (NGVYPRMNEVYTRLGEMNNAVRNLQELLELDSSS).

In terms of assembly, directly interacts with tubulin-gamma; this interaction determines centrosomal localization.

It is found in the cytoplasm. Its subcellular location is the cytoskeleton. It localises to the microtubule organizing center. The protein localises to the centrosome. Its function is as follows. Plays a role in the organization of both preexisting and nascent microtubules in interphase cells. During mitosis, required for the organization and orientation of the mitotic spindle. The protein is Centrosomal protein of 70 kDa (CEP70) of Macaca fascicularis (Crab-eating macaque).